Reading from the N-terminus, the 313-residue chain is Porphobilinogen deaminase (313 aa).

Cysteine 241 carries the S-(dipyrrolylmethanemethyl)cysteine modification.

It belongs to the HMBS family. As to quaternary structure, monomer. The cofactor is dipyrromethane.

The catalysed reaction is 4 porphobilinogen + H2O = hydroxymethylbilane + 4 NH4(+). It functions in the pathway porphyrin-containing compound metabolism; protoporphyrin-IX biosynthesis; coproporphyrinogen-III from 5-aminolevulinate: step 2/4. The protein operates within porphyrin-containing compound metabolism; chlorophyll biosynthesis. Its function is as follows. Tetrapolymerization of the monopyrrole PBG into the hydroxymethylbilane pre-uroporphyrinogen in several discrete steps. In Chlorobium chlorochromatii (strain CaD3), this protein is Porphobilinogen deaminase.